We begin with the raw amino-acid sequence, 157 residues long: Protein Smg homolog (157 aa).

Belongs to the Smg family.

This Shewanella denitrificans (strain OS217 / ATCC BAA-1090 / DSM 15013) protein is Protein Smg homolog.